We begin with the raw amino-acid sequence, 321 residues long: Peroxidase 28 (321 aa).

The signal sequence occupies residues 1–21; sequence MKIATFSVLLLLLFIFPVALA. 4 cysteine pairs are disulfide-bonded: cysteine 32–cysteine 111, cysteine 65–cysteine 70, cysteine 117–cysteine 317, and cysteine 196–cysteine 228. The active-site Proton acceptor is histidine 63. Residues aspartate 64, valine 67, glycine 69, aspartate 71, and serine 73 each contribute to the Ca(2+) site. Proline 159 serves as a coordination point for substrate. Histidine 189 contacts heme b. Position 190 (threonine 190) interacts with Ca(2+). Ca(2+) contacts are provided by aspartate 238, threonine 244, and aspartate 249.

Belongs to the peroxidase family. Classical plant (class III) peroxidase subfamily. The cofactor is heme b. Ca(2+) serves as cofactor.

It is found in the secreted. It catalyses the reaction 2 a phenolic donor + H2O2 = 2 a phenolic radical donor + 2 H2O. Its function is as follows. Removal of H(2)O(2), oxidation of toxic reductants, biosynthesis and degradation of lignin, suberization, auxin catabolism, response to environmental stresses such as wounding, pathogen attack and oxidative stress. These functions might be dependent on each isozyme/isoform in each plant tissue. The sequence is that of Peroxidase 28 (PER28) from Arabidopsis thaliana (Mouse-ear cress).